The chain runs to 644 residues: Chaperone protein DnaK (644 aa).

Disordered regions lie at residues 490–533 and 570–644; these read QEEA…ELDD and EELQ…EDDA. Positions 492–513 are enriched in basic and acidic residues; that stretch reads EAEKHKEEDEARRERIEARNEA. Over residues 523–533 the composition is skewed to acidic residues; sequence LLEENEEELDD. Over residues 588–622 the composition is skewed to gly residues; the sequence is GPGGAGGAAGAGPGGMGGMGGAAGPGGAGGAGPGG. The span at 624–644 shows a compositional bias: acidic residues; the sequence is DADDEEYVDADFEDVDDEDDA.

It belongs to the heat shock protein 70 family.

In terms of biological role, acts as a chaperone. The sequence is that of Chaperone protein DnaK from Halorubrum lacusprofundi (strain ATCC 49239 / DSM 5036 / JCM 8891 / ACAM 34).